Reading from the N-terminus, the 137-residue chain is Protein MGF 110-7L (137 aa).

A signal peptide spans Met1–Ser20. 3 N-linked (GlcNAc...) asparagine; by host glycosylation sites follow: Asn69, Asn70, and Asn105.

The protein belongs to the asfivirus MGF 110 family.

Its function is as follows. Plays a role in virus cell tropism, and may be required for efficient virus replication in macrophages. This African swine fever virus (isolate Tick/South Africa/Pretoriuskop Pr4/1996) (ASFV) protein is Protein MGF 110-7L.